Reading from the N-terminus, the 396-residue chain is Vitamin K-dependent protein Z (396 aa).

A Gla domain is found at 1–46; sequence AGSYLLEELFEGHLEKECWEEICVYEEAREVFEDDETTDEFWRTYM. A 4-carboxyglutamate mark is found at Glu-7, Glu-8, Glu-11, Glu-15, Glu-17, Glu-20, Glu-21, Glu-26, Glu-27, Glu-30, Glu-33, Glu-36, and Glu-40. Cysteines 18 and 23 form a disulfide. EGF-like domains are found at residues 47-83 and 85-126; these read GGSP…PNCA and AESE…RSCL. 7 disulfides stabilise this stretch: Cys-51–Cys-62, Cys-56–Cys-71, Cys-73–Cys-82, Cys-89–Cys-101, Cys-97–Cys-110, Cys-112–Cys-125, and Cys-169–Cys-185. Residue Ser-53 is glycosylated (O-linked (Glc...) serine). Asn-59 carries an N-linked (GlcNAc...) asparagine glycan. The residue at position 64 (Asp-64) is a (3R)-3-hydroxyaspartate. The Peptidase S1 domain maps to 135–357; it reads TLGPECCQRP…YALWLRQVTQ (223 aa). Asn-191 and Asn-289 each carry an N-linked (GlcNAc...) asparagine glycan. An intrachain disulfide couples Cys-284 to Cys-298. A disordered region spans residues 356 to 396; it reads TQQPSRASPRGDRGQGRDGEPVPGDRGGRWAPTALPPGPLV. Residues 364–375 are compositionally biased toward basic and acidic residues; the sequence is PRGDRGQGRDGE. O-linked (GalNAc...) threonine glycosylation occurs at Thr-388.

It belongs to the peptidase S1 family. The iron and 2-oxoglutarate dependent 3-hydroxylation of aspartate and asparagine is (R) stereospecific within EGF domains. Plasma.

The protein localises to the secreted. Functionally, inhibits activity of the coagulation protease factor Xa in the presence of SERPINA10, calcium and phospholipids. Appears to assist hemostasis by binding thrombin and promoting its association with phospholipid vesicles. The polypeptide is Vitamin K-dependent protein Z (PROZ) (Bos taurus (Bovine)).